Here is a 162-residue protein sequence, read N- to C-terminus: NADH-quinone oxidoreductase subunit I (162 aa).

4Fe-4S ferredoxin-type domains follow at residues 52-82 and 93-122; these read LRRY…IEAG and VRYD…EGPN. 8 residues coordinate [4Fe-4S] cluster: C62, C65, C68, C72, C102, C105, C108, and C112.

This sequence belongs to the complex I 23 kDa subunit family. NDH-1 is composed of 14 different subunits. Subunits NuoA, H, J, K, L, M, N constitute the membrane sector of the complex. [4Fe-4S] cluster is required as a cofactor.

The protein resides in the cell inner membrane. It catalyses the reaction a quinone + NADH + 5 H(+)(in) = a quinol + NAD(+) + 4 H(+)(out). Functionally, NDH-1 shuttles electrons from NADH, via FMN and iron-sulfur (Fe-S) centers, to quinones in the respiratory chain. The immediate electron acceptor for the enzyme in this species is believed to be ubiquinone. Couples the redox reaction to proton translocation (for every two electrons transferred, four hydrogen ions are translocated across the cytoplasmic membrane), and thus conserves the redox energy in a proton gradient. The chain is NADH-quinone oxidoreductase subunit I from Afipia carboxidovorans (strain ATCC 49405 / DSM 1227 / KCTC 32145 / OM5) (Oligotropha carboxidovorans).